The sequence spans 436 residues: Indole-3-acetyl-aspartic acid hydrolase (436 aa).

It belongs to the peptidase M20 family. In terms of assembly, monomer.

The enzyme catalyses (indol-3-yl)acetyl-L-aspartate + H2O = (indol-3-yl)acetate + L-aspartate. In terms of biological role, hydrolyzes indole-3-acetyl-aspartate (IAA-Asp) to indole-3-acetic acid (IAA). Shows an exclusively high substrate specificity for IAA-Asp. This chain is Indole-3-acetyl-aspartic acid hydrolase, found in Enterobacter agglomerans (Erwinia herbicola).